The sequence spans 388 residues: Chorismate synthase (388 aa).

Positions 39 and 45 each coordinate NADP(+). FMN-binding positions include 130-132 (RSS), 251-252 (NA), Gly-296, 311-315 (KPIPT), and Arg-337.

The protein belongs to the chorismate synthase family. Homotetramer. FMNH2 serves as cofactor.

It carries out the reaction 5-O-(1-carboxyvinyl)-3-phosphoshikimate = chorismate + phosphate. It functions in the pathway metabolic intermediate biosynthesis; chorismate biosynthesis; chorismate from D-erythrose 4-phosphate and phosphoenolpyruvate: step 7/7. Functionally, catalyzes the anti-1,4-elimination of the C-3 phosphate and the C-6 proR hydrogen from 5-enolpyruvylshikimate-3-phosphate (EPSP) to yield chorismate, which is the branch point compound that serves as the starting substrate for the three terminal pathways of aromatic amino acid biosynthesis. This reaction introduces a second double bond into the aromatic ring system. The chain is Chorismate synthase from Geobacillus kaustophilus (strain HTA426).